The primary structure comprises 396 residues: S-adenosylmethionine synthase (396 aa).

His-16 is a binding site for ATP. Asp-18 lines the Mg(2+) pocket. Glu-44 is a K(+) binding site. L-methionine contacts are provided by Glu-57 and Gln-100. The tract at residues 100 to 110 (QSVDINQGVDR) is flexible loop. Residues 165–167 (DAK), Asp-240, 246–247 (RK), Ala-263, and Lys-267 each bind ATP. Asp-240 lines the L-methionine pocket. L-methionine is bound at residue Lys-271.

The protein belongs to the AdoMet synthase family. Homotetramer; dimer of dimers. Mg(2+) is required as a cofactor. K(+) serves as cofactor.

The protein resides in the cytoplasm. It carries out the reaction L-methionine + ATP + H2O = S-adenosyl-L-methionine + phosphate + diphosphate. It participates in amino-acid biosynthesis; S-adenosyl-L-methionine biosynthesis; S-adenosyl-L-methionine from L-methionine: step 1/1. Functionally, catalyzes the formation of S-adenosylmethionine (AdoMet) from methionine and ATP. The overall synthetic reaction is composed of two sequential steps, AdoMet formation and the subsequent tripolyphosphate hydrolysis which occurs prior to release of AdoMet from the enzyme. The polypeptide is S-adenosylmethionine synthase (Pseudomonas aeruginosa (strain UCBPP-PA14)).